The sequence spans 207 residues: Ribosomal RNA small subunit methyltransferase G (207 aa).

S-adenosyl-L-methionine contacts are provided by residues Gly-74, Leu-79, 125–126, and Arg-140; that span reads VE.

The protein belongs to the methyltransferase superfamily. RNA methyltransferase RsmG family.

It is found in the cytoplasm. It catalyses the reaction guanosine(527) in 16S rRNA + S-adenosyl-L-methionine = N(7)-methylguanosine(527) in 16S rRNA + S-adenosyl-L-homocysteine. In terms of biological role, specifically methylates the N7 position of guanine in position 527 of 16S rRNA. The chain is Ribosomal RNA small subunit methyltransferase G from Shewanella halifaxensis (strain HAW-EB4).